A 342-amino-acid chain; its full sequence is Methylthioribose-1-phosphate isomerase (342 aa).

Substrate-binding positions include 49–51 (RGA), Arg86, and Gln187. Asp228 acts as the Proton donor in catalysis. 238-239 (NK) provides a ligand contact to substrate.

Belongs to the eIF-2B alpha/beta/delta subunits family. MtnA subfamily.

It catalyses the reaction 5-(methylsulfanyl)-alpha-D-ribose 1-phosphate = 5-(methylsulfanyl)-D-ribulose 1-phosphate. It participates in amino-acid biosynthesis; L-methionine biosynthesis via salvage pathway; L-methionine from S-methyl-5-thio-alpha-D-ribose 1-phosphate: step 1/6. Functionally, catalyzes the interconversion of methylthioribose-1-phosphate (MTR-1-P) into methylthioribulose-1-phosphate (MTRu-1-P). This is Methylthioribose-1-phosphate isomerase from Klebsiella pneumoniae subsp. pneumoniae (strain ATCC 700721 / MGH 78578).